Here is a 370-residue protein sequence, read N- to C-terminus: Protein Mut11 (370 aa).

Residues 1 to 22 are disordered; that stretch reads MARGPGDTDMDEASADAAIPSS. WD repeat units lie at residues 38-77, 80-119, 122-162, 165-204, 208-247, 262-301, and 329-370; these read GHTKAVAAVKFSPDGSLLASGSADRTVALWDAATGARVNT, GHSCGVSDVAWNPNGRYLATAADDHSLKLWDAETGACLRT, GHTN…CLRE, AHSDPVTSAAFSYDGSMVVTSSLDGLIRLWDTQTGHCLKT, RDSPPVSFAAFTPNAKYVLCNTLDGRAKLWDYAAGRTRRT, GFLGGSSSASFDLGCSMVVTGSEDGSLAAYDISTGHVVGR, and GHTA…PAAA.

The protein belongs to the WD repeat WDR5/wds family.

Its subcellular location is the nucleus. Its function is as follows. Part of a complex involved in 'Lys-4' histone H3 methylation. The protein is Protein Mut11 (Mut11) of Chlamydomonas reinhardtii (Chlamydomonas smithii).